The primary structure comprises 711 residues: Polyribonucleotide nucleotidyltransferase (711 aa).

D494 and D500 together coordinate Mg(2+). In terms of domain architecture, KH spans 560–620 (PKIEIFGVDP…INVENAKSDI (61 aa)). The 60-residue stretch at 651–710 (GEEFDGVVKKIMDFGAFISLKDGIDGLLHVSKIKTQLSEGDTLRVKVEEIKRGKISLELC) folds into the S1 motif domain.

Belongs to the polyribonucleotide nucleotidyltransferase family. It depends on Mg(2+) as a cofactor.

It is found in the cytoplasm. It carries out the reaction RNA(n+1) + phosphate = RNA(n) + a ribonucleoside 5'-diphosphate. In terms of biological role, involved in mRNA degradation. Catalyzes the phosphorolysis of single-stranded polyribonucleotides processively in the 3'- to 5'-direction. The sequence is that of Polyribonucleotide nucleotidyltransferase from Campylobacter hominis (strain ATCC BAA-381 / DSM 21671 / CCUG 45161 / LMG 19568 / NCTC 13146 / CH001A).